A 187-amino-acid polypeptide reads, in one-letter code: Elongation factor P (187 aa).

Belongs to the elongation factor P family.

The protein localises to the cytoplasm. The protein operates within protein biosynthesis; polypeptide chain elongation. Involved in peptide bond synthesis. Stimulates efficient translation and peptide-bond synthesis on native or reconstituted 70S ribosomes in vitro. Probably functions indirectly by altering the affinity of the ribosome for aminoacyl-tRNA, thus increasing their reactivity as acceptors for peptidyl transferase. The chain is Elongation factor P from Mycolicibacterium vanbaalenii (strain DSM 7251 / JCM 13017 / BCRC 16820 / KCTC 9966 / NRRL B-24157 / PYR-1) (Mycobacterium vanbaalenii).